Consider the following 383-residue polypeptide: Lipid-A-disaccharide synthase (383 aa).

The protein belongs to the LpxB family.

It carries out the reaction a lipid X + a UDP-2-N,3-O-bis[(3R)-3-hydroxyacyl]-alpha-D-glucosamine = a lipid A disaccharide + UDP + H(+). It participates in bacterial outer membrane biogenesis; LPS lipid A biosynthesis. Functionally, condensation of UDP-2,3-diacylglucosamine and 2,3-diacylglucosamine-1-phosphate to form lipid A disaccharide, a precursor of lipid A, a phosphorylated glycolipid that anchors the lipopolysaccharide to the outer membrane of the cell. This is Lipid-A-disaccharide synthase from Syntrophus aciditrophicus (strain SB).